The chain runs to 118 residues: Integration host factor subunit alpha (118 aa).

Residues 97–118 (NGAMPMSTEESDENTAQSASGG) form a disordered region.

It belongs to the bacterial histone-like protein family. In terms of assembly, heterodimer of an alpha and a beta chain.

This protein is one of the two subunits of integration host factor, a specific DNA-binding protein that functions in genetic recombination as well as in transcriptional and translational control. The polypeptide is Integration host factor subunit alpha (Rhodopseudomonas palustris (strain ATCC BAA-98 / CGA009)).